A 385-amino-acid chain; its full sequence is tRNA-specific 2-thiouridylase MnmA (385 aa).

ATP is bound by residues 18 to 25 (AMSGGVDS) and Leu44. Catalysis depends on Cys112, which acts as the Nucleophile. The cysteines at positions 112 and 209 are disulfide-linked. An ATP-binding site is contributed by Gly136. An interaction with tRNA region spans residues 159-161 (RDQ). Residue Cys209 is the Cysteine persulfide intermediate of the active site.

This sequence belongs to the MnmA/TRMU family.

It localises to the cytoplasm. The enzyme catalyses S-sulfanyl-L-cysteinyl-[protein] + uridine(34) in tRNA + AH2 + ATP = 2-thiouridine(34) in tRNA + L-cysteinyl-[protein] + A + AMP + diphosphate + H(+). In terms of biological role, catalyzes the 2-thiolation of uridine at the wobble position (U34) of tRNA, leading to the formation of s(2)U34. This is tRNA-specific 2-thiouridylase MnmA from Methylorubrum extorquens (strain PA1) (Methylobacterium extorquens).